A 2569-amino-acid chain; its full sequence is MVVKFANGVRNRGNGDEGQRGTQRPLSTPIAIVGMSCRFAGGATSPSNLWGLLSEGKDAWSPVPTDRFDASSLYHPDQQRTDRHHIQGGYFLDGDVTRFDAPFFNLSAEAASSMDPQLRLSMEGVFEALENAGIPLGKIAGTNTSVFSGTFGRDYTDRLVKDPETLPPSYFTGNGAAMYSNRISHFFDLKGQSVTTDTGCSGSMAALHLAAQTIRTGESDMSIVAVAQFMMNPDLYIALSNLGVLSPQGKCLPWDHRANGYGRGEGMAVVILKRLDLALKDGDHIHSVIRESAMNQDGKTSTITTPAKEAQQTLIRDCYSRAGLSLSETAYIEAHMTGTPTGDPIEAESLAKTFGAARAAGDSVYVGSIKANIGHTEPVSGLASIIKTALVLQHQQIPPHLNYEKSNPAIPLQDWNLKLPLSLIGWPEGAPLRASVNNFGYGGTNVHVIMEAAPVSTAKTLHTSEFNTINEVESQQIGPTEASPSYVYIISSRHSAGGLEMGESLALHIRDSIMRDQKPRAIDLAYTLAERRTRFAWTTVVKATSIEELADKLEETLRKPIRATTIPRLGFIFNGQGAQWYAMGRELLARYPVFQSAVRHCDHILTQIYQAPWSLYEELSRDEASSRIHDAEISQPANVAIQLCLVDLLTSWNVMPTAVVSHSSGEIAAAYAAGILSFKEALGVAYYRGFLLAAHCTGDALQGGMMAVRLSVDDVQGYIKSTSSGKVVIACVNSPSSVTLSGDIDALTELASMLEDDAVPARKLNVPLAYHSHHMNPIAKSYQNRLDVLLDTGKVPKILVASPVTGELVSHGETLDSKHWVKNLVSPVLFSEALESMVFGSKNVDRHSSSGTQSMNVDILIEVGAHSTLSGAVRETLGNAQLPYLSCLRRNIDAVSTMQDVACDLLVRGYPVSLAGVNFLEGQELNFVHDLPTYAWDHSTSYLVEPRASRQNRYRRFPSHELLGSSVPGASSLTPTWRNFLRVQDLEWLADHQLESKIVFPAAGYISMAIEAVRRLKLSSGAREEPTSYRLRDIDFMTALLISSGQSGTEVVFTLRDCSDKELDYRGWYEFELFSISPSDAWIRHCTGYVSAEDSSKNLKATRALSSDVERVAVADRVRHVRPDAMFAGLRKTGIYHGPAFQNLIGSKITGSSSDTSFMLSPKALAKDEEYVLHPTTLDSIFQTCYFSLPEEAQDRAMMVPKSIGSLTVPRDFGRQNDNKLQSRVRLLHCTSRDAAFKGTVVQAKMSEEADVPLLMHNLRLQKIQAEDDNAGKLFRVHSQGRWEPDILHDVPAKTKASMQIVLSDSGLSDEKDFREAAYHLMFECLAQLQHEESKGWQPFHKRYHHWLQTIVKSVETGQLAHAAALEAHEWLDRSEAAKRSILEKVAAMNAGGELLVKIGRHLTQIIRGDITPLELMMENGLLQRYYTELPQFNNTYQQLRKVLEHYAIKEPGAKILEVGAGTGGATLHALQAFAAMDETNSSKTLLGHYDYTDVSADFFPEAKKKFASWEGRMNFARLNIEIDPIQQGFTAGSYDLIIASQVLHATVSLANTLSNVRKLLKPKGKLIFLEGTQHSIDLELIFGTLPGWWLGEEPERQMSAIADVPTWDRFLKSSGFSGVDMNIGNCEQPEVQVSSVLIATAAAEPSYPSSISIIWGRNAPLAWRKELATAIAAKTGTAPRHETLKDVCPDETTLYLVAIELEYDLVSSMNQVTFEKLRHLLVSSMGIFWVSGGGLIDSQKPLWGLTPGLLRTFRREDMNKRCVHLDFDVSKDLWNAETTNHIMHVFEEGFDYSLENSNMDWEYAVKNSELHVLRYYPDVELDMRCSGIKPMPEHRLWYDDERDLQYQVPEGSGDLLNKIEFLEVPRLVDDVPFGMVEIETKAFGLNFQDLMLALGFVKDVLTLTHEGAGFVKRLGPGTERSGLRIGDRICGAFRGSFASTSMAWWTNIVKIPDEMSWEEAAAFSVAYLTVHVGLDHVARLQKEERILIHSAAGGVGQAAIMWAQHVGAEIFATCGTETKRQFLMDTYNISADHIFSSRDACFASEIIDRTGEQGVDVVLNSLGGPLLKASWGCLADFGRFVEIGKVDLHAAKRLDMTPFGRNITMAGVDLVAYSELRGMVIHNALVALMKLYRSGHLRSLRPITRFNISDMGAAMKHMQSGTHMGKIVLTIEPTAVVNVSPRITSLDLANMNVTHLIVGGLRGVGHAIALRMIEKGARNVLAISRNASSHPNRLELQKTADQHGCKLVIRDCDISSAEELVEIVGSLGDLHMPPIGGVLQAAMVLDDTVLERMSYEQWQTAVRPKVAGTLNLHNNLPGLRYFIMLSSGTAITGNVSQANYAAGNTFQDTLARHRTLHGEPAISINLGPVDDVGYVAEQGEDVLKRVDKAVTSMSLSVNHVMQLIEGGIIDPLKKTGDKSQIITCFPRYEALPDNQGVKDDKRFGTLRLGDEGVASTGGNGLSASRVNELTQELVSNGRSTGESAARKLVSELITEELSELFSIDPNDIDPGMPLTHHGVDSLVAVRVRNWLISEVKARVAIFEILQSPSLTDFAALVASRSSLITSCV.

The disordered stretch occupies residues 1–25; that stretch reads MVVKFANGVRNRGNGDEGQRGTQRP. The Ketosynthase family 3 (KS3) domain occupies 27-452; the sequence is STPIAIVGMS…GTNVHVIMEA (426 aa). Residues Cys200, His335, and His375 each act as for beta-ketoacyl synthase activity in the active site. A malonyl-CoA:ACP transacylase (MAT) domain region spans residues 572–892; the sequence is IFNGQGAQWY…PYLSCLRRNI (321 aa). The interval 960–1097 is N-terminal hotdog fold; that stretch reads HELLGSSVPG…GYVSAEDSSK (138 aa). The tract at residues 960–1268 is dehydratase (DH) domain; sequence HELLGSSVPG…LRLQKIQAED (309 aa). The region spanning 960-1270 is the PKS/mFAS DH domain; that stretch reads HELLGSSVPG…LQKIQAEDDN (311 aa). His992 functions as the Proton acceptor; for dehydratase activity in the catalytic mechanism. The tract at residues 1117-1270 is C-terminal hotdog fold; it reads RVRHVRPDAM…LQKIQAEDDN (154 aa). Asp1179 functions as the Proton donor; for dehydratase activity in the catalytic mechanism. A methyltransferase (CMet) domain region spans residues 1457-1567; that stretch reads LEVGAGTGGA…RKLLKPKGKL (111 aa). The enoyl reductase (ER) domain stretch occupies residues 1855–2170; it reads DLLNKIEFLE…SGTHMGKIVL (316 aa). The interval 2195 to 2371 is ketoreductase (KR) domain; that stretch reads THLIVGGLRG…AISINLGPVD (177 aa). The Carrier domain maps to 2485–2562; the sequence is AARKLVSELI…DFAALVASRS (78 aa). An O-(pantetheine 4'-phosphoryl)serine modification is found at Ser2522.

Highly reducing polyketide synthase; part of the gene cluster that mediates the biosynthesis of abscisic acid (ABA), a phytohormone that acts antagonistically toward salicylic acid (SA), jasmonic acid (JA) and ethylene (ETH) signaling, to impede plant defense responses. The first step of the pathway catalyzes the reaction from farnesyl diphosphate to alpha-ionylideneethane performed by the alpha-ionylideneethane synthase abl3 via a three-step reaction mechanism involving 2 neutral intermediates, beta-farnesene and allofarnesene. The cytochrome P450 monooxygenase abl1 might then be involved in the conversion of alpha-ionylideneethane to alpha-ionylideneacetic acid. Alpha-ionylideneacetic acid is further converted to abscisic acid in 2 steps involving the cytochrome P450 monooxygenase abl2 and the short-chain dehydrogenase/reductase abl4, via the intermediates 1'-deoxy-ABA or 1',4'-trans-diol-ABA, depending on the order of action of these 2 enzymes. Abl2 is responsible for the hydroxylation of carbon atom C-1' and abl4 might be involved in the oxidation of the C-4' carbon atom. Pks5 is clearly not involved in the production of ABA. Nonetheless, the possibility cannot be excluded that pks5 may modify ABA into another compound. It also cannot be excluded the possibility that pks5 also has a function completely independent of ABA synthesis. Pks5 is not required for pathogenicity on B.napus cotyledon. The chain is Highly reducing polyketide synthase pks5 from Leptosphaeria maculans (strain JN3 / isolate v23.1.3 / race Av1-4-5-6-7-8) (Blackleg fungus).